The primary structure comprises 345 residues: Biotin synthase (345 aa).

The Radical SAM core domain occupies 38-256 (RQVQVSTLLS…IAVARIMMPS (219 aa)). Positions 53, 57, and 60 each coordinate [4Fe-4S] cluster. The [2Fe-2S] cluster site is built by Cys97, Cys128, Cys188, and Arg260.

This sequence belongs to the radical SAM superfamily. Biotin synthase family. In terms of assembly, homodimer. [4Fe-4S] cluster serves as cofactor. It depends on [2Fe-2S] cluster as a cofactor.

It catalyses the reaction (4R,5S)-dethiobiotin + (sulfur carrier)-SH + 2 reduced [2Fe-2S]-[ferredoxin] + 2 S-adenosyl-L-methionine = (sulfur carrier)-H + biotin + 2 5'-deoxyadenosine + 2 L-methionine + 2 oxidized [2Fe-2S]-[ferredoxin]. The protein operates within cofactor biosynthesis; biotin biosynthesis; biotin from 7,8-diaminononanoate: step 2/2. Catalyzes the conversion of dethiobiotin (DTB) to biotin by the insertion of a sulfur atom into dethiobiotin via a radical-based mechanism. The chain is Biotin synthase from Yersinia pseudotuberculosis serotype O:1b (strain IP 31758).